Consider the following 197-residue polypeptide: GTP cyclohydrolase-2 (197 aa).

50–54 (RIHSE) is a GTP binding site. Positions 55, 66, and 68 each coordinate Zn(2+). GTP is bound by residues glutamine 71, 93-95 (EGR), and threonine 115. The Proton acceptor role is filled by aspartate 127. Arginine 129 serves as the catalytic Nucleophile. Residues threonine 150 and lysine 155 each coordinate GTP.

Belongs to the GTP cyclohydrolase II family. Requires Zn(2+) as cofactor.

It catalyses the reaction GTP + 4 H2O = 2,5-diamino-6-hydroxy-4-(5-phosphoribosylamino)-pyrimidine + formate + 2 phosphate + 3 H(+). It functions in the pathway cofactor biosynthesis; riboflavin biosynthesis; 5-amino-6-(D-ribitylamino)uracil from GTP: step 1/4. In terms of biological role, catalyzes the conversion of GTP to 2,5-diamino-6-ribosylamino-4(3H)-pyrimidinone 5'-phosphate (DARP), formate and pyrophosphate. This is GTP cyclohydrolase-2 from Neisseria meningitidis serogroup A / serotype 4A (strain DSM 15465 / Z2491).